We begin with the raw amino-acid sequence, 632 residues long: ATP-dependent zinc metalloprotease FtsH (632 aa).

Residues 1-9 (MKPTNEPKK) are Cytoplasmic-facing. A helical transmembrane segment spans residues 10-30 (PFFQSPIVLAVLGGILLIFFL). Residues 31–116 (RSFNSDGSFS…INYSGFSESN (86 aa)) lie on the Periplasmic side of the membrane. The chain crosses the membrane as a helical span at residues 117-137 (FFTDMLGWLMPILVILGLWMF). Over 138–632 (MANRMQKNMG…RLIPLEEQAS (495 aa)) the chain is Cytoplasmic. 210–217 (GPPGTGKT) lines the ATP pocket. Zn(2+) is bound at residue H434. E435 is a catalytic residue. H438 and D511 together coordinate Zn(2+).

It in the central section; belongs to the AAA ATPase family. In the C-terminal section; belongs to the peptidase M41 family. Homohexamer. It depends on Zn(2+) as a cofactor.

It localises to the cell inner membrane. In terms of biological role, acts as a processive, ATP-dependent zinc metallopeptidase for both cytoplasmic and membrane proteins. Plays a role in the quality control of integral membrane proteins. This Helicobacter pylori (strain J99 / ATCC 700824) (Campylobacter pylori J99) protein is ATP-dependent zinc metalloprotease FtsH.